The following is a 478-amino-acid chain: Putative response regulator NtrX-like (478 aa).

Residues 5-121 (DVLIVDDEED…KLVILLKRAC (117 aa)) enclose the Response regulatory domain. Residue D54 is modified to 4-aspartylphosphate. A Sigma-54 factor interaction domain is found at 143–372 (LVGNSTITLK…LRNVVEWTLI (230 aa)). ATP is bound by residues 171–178 (GKVGSGKE) and 235–244 (ANNGTLYIDE).

In terms of biological role, member of the two-component regulatory system RBE_0312/RBE_0470. This Rickettsia bellii (strain RML369-C) protein is Putative response regulator NtrX-like.